The sequence spans 291 residues: DegV domain-containing protein CPE0026 (291 aa).

The DegV domain maps to 4-286 (FVIFTDSAAD…IGTLAVFFLG (283 aa)). Positions 63 and 95 each coordinate hexadecanoate.

Its function is as follows. May bind long-chain fatty acids, such as palmitate, and may play a role in lipid transport or fatty acid metabolism. The polypeptide is DegV domain-containing protein CPE0026 (Clostridium perfringens (strain 13 / Type A)).